The primary structure comprises 808 residues: Enhancer of polycomb homolog 2 (808 aa).

Glycyl lysine isopeptide (Lys-Gly) (interchain with G-Cter in SUMO2) cross-links involve residues Lys135, Lys195, and Lys324. The tract at residues 337–357 is disordered; it reads YPKKPKAEAGIAPQQPTPETL. A Glycyl lysine isopeptide (Lys-Gly) (interchain with G-Cter in SUMO2) cross-link involves residue Lys362. Disordered regions lie at residues 371–397, 595–630, and 645–682; these read QSSD…PDGS, QRQQ…CMSK, and VSAP…LYST. Residues 595 to 614 are compositionally biased toward low complexity; sequence QRQQLAQLHQKQQSQHSSQQ. Composition is skewed to polar residues over residues 615–630 and 658–682; these read THPK…CMSK and EQNT…LYST. Ser755 carries the post-translational modification Phosphoserine.

Belongs to the enhancer of polycomb family.

It localises to the nucleus. Functionally, may play a role in transcription or DNA repair. The polypeptide is Enhancer of polycomb homolog 2 (Epc2) (Mus musculus (Mouse)).